We begin with the raw amino-acid sequence, 292 residues long: Pyridoxal 5'-phosphate synthase subunit PdxS (292 aa).

Asp-22 contributes to the D-ribose 5-phosphate binding site. Residue Lys-79 is the Schiff-base intermediate with D-ribose 5-phosphate of the active site. D-ribose 5-phosphate is bound at residue Gly-151. D-glyceraldehyde 3-phosphate is bound at residue Arg-163. D-ribose 5-phosphate contacts are provided by residues Gly-212 and 233-234 (GS).

This sequence belongs to the PdxS/SNZ family. In the presence of PdxT, forms a dodecamer of heterodimers.

It carries out the reaction aldehydo-D-ribose 5-phosphate + D-glyceraldehyde 3-phosphate + L-glutamine = pyridoxal 5'-phosphate + L-glutamate + phosphate + 3 H2O + H(+). It functions in the pathway cofactor biosynthesis; pyridoxal 5'-phosphate biosynthesis. Functionally, catalyzes the formation of pyridoxal 5'-phosphate from ribose 5-phosphate (RBP), glyceraldehyde 3-phosphate (G3P) and ammonia. The ammonia is provided by the PdxT subunit. Can also use ribulose 5-phosphate and dihydroxyacetone phosphate as substrates, resulting from enzyme-catalyzed isomerization of RBP and G3P, respectively. This Ruminiclostridium cellulolyticum (strain ATCC 35319 / DSM 5812 / JCM 6584 / H10) (Clostridium cellulolyticum) protein is Pyridoxal 5'-phosphate synthase subunit PdxS.